Reading from the N-terminus, the 425-residue chain is MSKIHDARRVVITGIGVVAPGDVGTKPFWEMLTAGRTATRPISSFDASPFRSQVAAECDFDPAAEGLSQRQVRAWDRTMQFAYVAAREALADSGVTGEADPLRTGVMAGTACGMTMSLDREYAVVSDEGRLWQVDDAHGVPYLYDYFVPSSMAAEIAWLAEAEGPAGVVSAGCTSGIDVLTHAADLVRDGAAEVMVAGASDAAISPITVACFDAIKATTPRNDEPETASRPFDRTRNGFVLGEGAAFFVLEEYAHARRRGARAYAEIAGYAGRCNAYSMTGLRSDGRELAEAVSRALDIARVDPSEVDYVNAHGSATKQNDLHETAAFKRSLGPHAYSVPISSIKSMIGHSLGAICALEVAASALRIEHGVIPPTANLREPDPDCDLDYVPLVAREAEVSTVVSVASGFGGFQSAIVLTEPGRQR.

Residues 7-420 enclose the Ketosynthase family 3 (KS3) domain; it reads ARRVVITGIG…GFQSAIVLTE (414 aa). Residues C173, H313, and H350 each act as for beta-ketoacyl synthase activity in the active site.

It belongs to the thiolase-like superfamily. Beta-ketoacyl-ACP synthases family.

It participates in antibiotic biosynthesis; oxytetracycline biosynthesis. The chain is Oxytetracycline polyketide putative beta-ketoacyl synthase 1 from Streptomyces rimosus.